A 130-amino-acid chain; its full sequence is Histone H2A type 1 (130 aa).

The segment at 1–22 (MSGRGKQGGKARAKAKSRSSRA) is disordered. N-acetylserine is present on Ser-2. Phosphoserine; by RPS6KA5 is present on Ser-2. The residue at position 4 (Arg-4) is a Citrulline; alternate. Arg-4 carries the post-translational modification Symmetric dimethylarginine; by PRMT5; alternate. Lys-6 is modified (N6-(2-hydroxyisobutyryl)lysine). Residues 7–19 (QGGKARAKAKSRS) are compositionally biased toward basic residues. Residue Lys-10 is modified to N6-(2-hydroxyisobutyryl)lysine; alternate. At Lys-10 the chain carries N6-lactoyllysine; alternate. At Lys-10 the chain carries N6-succinyllysine; alternate. Glycyl lysine isopeptide (Lys-Gly) (interchain with G-Cter in ubiquitin) cross-links involve residues Lys-14 and Lys-16. The residue at position 37 (Lys-37) is an N6-(2-hydroxyisobutyryl)lysine; alternate. Residue Lys-37 is modified to N6-(beta-hydroxybutyryl)lysine; alternate. Position 37 is an N6-crotonyllysine; alternate (Lys-37). Residues Lys-75 and Lys-76 each carry the N6-(2-hydroxyisobutyryl)lysine modification. Lys-96 carries the N6-(2-hydroxyisobutyryl)lysine; alternate modification. Lys-96 is modified (N6-succinyllysine; alternate). Position 96 is an N6-glutaryllysine; alternate (Lys-96). Position 100 is an N6-glutaryllysine (Lys-100). Gln-105 is modified (N5-methylglutamine). Lys-119 carries the N6-(2-hydroxyisobutyryl)lysine; alternate modification. 2 positions are modified to N6-crotonyllysine; alternate: Lys-119 and Lys-120. An N6-glutaryllysine; alternate mark is found at Lys-119 and Lys-120. A Glycyl lysine isopeptide (Lys-Gly) (interchain with G-Cter in ubiquitin); alternate cross-link involves residue Lys-120. Thr-121 carries the post-translational modification Phosphothreonine; by DCAF1. The residue at position 126 (Lys-126) is an N6-crotonyllysine; alternate. Lys-126 is subject to N6-glutaryllysine; alternate.

Belongs to the histone H2A family. The nucleosome is a histone octamer containing two molecules each of H2A, H2B, H3 and H4 assembled in one H3-H4 heterotetramer and two H2A-H2B heterodimers. The octamer wraps approximately 147 bp of DNA. Interacts with VRK1; the interaction is mediated by the nucleosome acidic patch, a cluster of negatively charged residues of H2A and H2B forming a cleft within the nucleosome core. Deiminated on Arg-4 in granulocytes upon calcium entry. In terms of processing, monoubiquitination of Lys-120 (H2AK119Ub) by RING1, TRIM37 and RNF2/RING2 complex gives a specific tag for epigenetic transcriptional repression and participates in X chromosome inactivation of female mammals. It is involved in the initiation of both imprinted and random X inactivation. Ubiquitinated H2A is enriched in inactive X chromosome chromatin. Ubiquitination of H2A functions downstream of methylation of 'Lys-27' of histone H3 (H3K27me). H2AK119Ub by RNF2/RING2 can also be induced by ultraviolet and may be involved in DNA repair. Following DNA double-strand breaks (DSBs), it is ubiquitinated through 'Lys-63' linkage of ubiquitin moieties by the E2 ligase UBE2N and the E3 ligases RNF8 and RNF168, leading to the recruitment of repair proteins to sites of DNA damage. Ubiquitination at Lys-14 and Lys-16 (H2AK13Ub and H2AK15Ub, respectively) in response to DNA damage is initiated by RNF168 that mediates monoubiquitination at these 2 sites, and 'Lys-63'-linked ubiquitin are then conjugated to monoubiquitin; RNF8 is able to extend 'Lys-63'-linked ubiquitin chains in vitro. H2AK119Ub and ionizing radiation-induced 'Lys-63'-linked ubiquitination (H2AK13Ub and H2AK15Ub) are distinct events. Post-translationally, phosphorylation on Ser-2 (H2AS1ph) is enhanced during mitosis. Phosphorylation on Ser-2 by RPS6KA5/MSK1 directly represses transcription. Acetylation of H3 inhibits Ser-2 phosphorylation by RPS6KA5/MSK1. Phosphorylation at Thr-121 (H2AT120ph) by DCAF1 is present in the regulatory region of many tumor suppresor genes and down-regulates their transcription. Symmetric dimethylation on Arg-4 by the PRDM1/PRMT5 complex may play a crucial role in the germ-cell lineage. In terms of processing, glutamine methylation at Gln-105 (H2AQ104me) by FBL is specifically dedicated to polymerase I. It is present at 35S ribosomal DNA locus and impairs binding of the FACT complex. Post-translationally, crotonylation (Kcr) is specifically present in male germ cells and marks testis-specific genes in post-meiotic cells, including X-linked genes that escape sex chromosome inactivation in haploid cells. Crotonylation marks active promoters and enhancers and confers resistance to transcriptional repressors. It is also associated with post-meiotically activated genes on autosomes. Lactylated in macrophages by EP300/P300 by using lactoyl-CoA directly derived from endogenous or exogenous lactate, leading to stimulates gene transcription.

The protein localises to the nucleus. It is found in the chromosome. In terms of biological role, core component of nucleosome. Nucleosomes wrap and compact DNA into chromatin, limiting DNA accessibility to the cellular machineries which require DNA as a template. Histones thereby play a central role in transcription regulation, DNA repair, DNA replication and chromosomal stability. DNA accessibility is regulated via a complex set of post-translational modifications of histones, also called histone code, and nucleosome remodeling. The sequence is that of Histone H2A type 1 from Rattus norvegicus (Rat).